Consider the following 435-residue polypeptide: ATP-dependent RNA helicase SUB2 (435 aa).

Residues 1–40 (MSHEGQEELLDYSDSEEIAVPTTTAPSAAAGEGANDKEAD) are disordered. Acidic residues predominate over residues 7-17 (EELLDYSDSEE). Over residues 19-33 (AVPTTTAPSAAAGEG) the composition is skewed to low complexity. The Q motif signature appears at 51–79 (TGFRDFLLKPELLRAIGDCGFEHPSEVQQ). In terms of domain architecture, Helicase ATP-binding spans 82–257 (IPQSILGTDV…KKFMQNPLEI (176 aa)). ATP is bound at residue 95–102 (AKSGLGKT). A DECD box motif is present at residues 204–207 (DECD). One can recognise a Helicase C-terminal domain in the interval 269 to 430 (GLQQYYIKLD…EFPEEGVDPS (162 aa)).

The protein belongs to the DEAD box helicase family. DECD subfamily.

Its subcellular location is the nucleus. The enzyme catalyses ATP + H2O = ADP + phosphate + H(+). Its function is as follows. ATP-binding RNA helicase involved in transcription elongation and required for the export of mRNA out of the nucleus. SUB2 also plays a role in pre-mRNA splicing and spliceosome assembly. May be involved in rDNA and telomeric silencing, and maintenance of genome integrity. In Debaryomyces hansenii (strain ATCC 36239 / CBS 767 / BCRC 21394 / JCM 1990 / NBRC 0083 / IGC 2968) (Yeast), this protein is ATP-dependent RNA helicase SUB2 (SUB2).